The chain runs to 394 residues: THAP domain-containing protein 5 (394 aa).

Residues 1 to 84 form a THAP-type zinc finger; the sequence is MPRYCAAICC…LKQTAIPTIF (84 aa). The segment at 86–109 is disordered; the sequence is LPEDNQEKDPSKKKSQKKKLKSEK. Positions 320–323 match the HCFC1-binding motif (HBM) motif; sequence EHSY. Residues 347 to 381 adopt a coiled-coil conformation; that stretch reads LELQEQQTLGRLKSLEALIRQLKQENWLSEENVKI.

As to quaternary structure, interacts with HTRA2; under apoptotic conditions. Interacts with ABRAXAS2. Post-translationally, cleaved by HTRA2 during apoptosis.

It is found in the nucleus. Its function is as follows. Has sequence-specific DNA-binding activity and can function as transcriptional repressor (in vitro). May be a regulator of cell cycle: THAP5 overexpression in human cell lines causes cell cycle arrest at G2/M phase. The sequence is that of THAP domain-containing protein 5 (THAP5) from Bos taurus (Bovine).